A 148-amino-acid chain; its full sequence is Large ribosomal subunit protein uL15 (148 aa).

A disordered region spans residues 1–57 (MRLNDVKPQKGSKKRRRRVGRGISAGQGASAGLGMRGQKSRSGSGTRPGFEGGQQPL). Residues 10-20 (KGSKKRRRRVG) show a composition bias toward basic residues. A compositionally biased stretch (gly residues) spans 23–35 (ISAGQGASAGLGM).

It belongs to the universal ribosomal protein uL15 family. Part of the 50S ribosomal subunit.

In terms of biological role, binds to the 23S rRNA. The polypeptide is Large ribosomal subunit protein uL15 (Nostoc sp. (strain PCC 7120 / SAG 25.82 / UTEX 2576)).